The primary structure comprises 351 residues: Protein-glutamate methylesterase/protein-glutamine glutaminase (351 aa).

The Response regulatory domain maps to 8–125 (TVVVVDDSLT…GEDPFAGLGD (118 aa)). 4-aspartylphosphate is present on aspartate 59. In terms of domain architecture, CheB-type methylesterase spans 151-345 (PKIGTVVGIG…PAILNLCERR (195 aa)). Residues serine 162, histidine 188, and aspartate 287 contribute to the active site.

The protein belongs to the CheB family. Post-translationally, phosphorylated by CheA. Phosphorylation of the N-terminal regulatory domain activates the methylesterase activity.

The protein resides in the cytoplasm. The enzyme catalyses [protein]-L-glutamate 5-O-methyl ester + H2O = L-glutamyl-[protein] + methanol + H(+). It carries out the reaction L-glutaminyl-[protein] + H2O = L-glutamyl-[protein] + NH4(+). Involved in chemotaxis. Part of a chemotaxis signal transduction system that modulates chemotaxis in response to various stimuli. Catalyzes the demethylation of specific methylglutamate residues introduced into the chemoreceptors (methyl-accepting chemotaxis proteins or MCP) by CheR. Also mediates the irreversible deamidation of specific glutamine residues to glutamic acid. The polypeptide is Protein-glutamate methylesterase/protein-glutamine glutaminase (Gluconobacter oxydans (strain 621H) (Gluconobacter suboxydans)).